An 87-amino-acid chain; its full sequence is Apolipoprotein C-I (87 aa).

Residues 1–26 (MRLFLSLPVLVVVLAMVLEGPAPAQA) form the signal peptide.

The protein belongs to the apolipoprotein C1 family.

It is found in the secreted. Inhibitor of lipoprotein binding to the low density lipoprotein (LDL) receptor, LDL receptor-related protein, and very low density lipoprotein (VLDL) receptor. Associates with high density lipoproteins (HDL) and the triacylglycerol-rich lipoproteins in the plasma and makes up about 10% of the protein of the VLDL and 2% of that of HDL. Appears to interfere directly with fatty acid uptake and is also the major plasma inhibitor of cholesteryl ester transfer protein (CETP). Binds free fatty acids and reduces their intracellular esterification. Modulates the interaction of APOE with beta-migrating VLDL and inhibits binding of beta-VLDL to the LDL receptor-related protein. The polypeptide is Apolipoprotein C-I (APOC1) (Zalophus californianus (California sealion)).